The chain runs to 37 residues: Large ribosomal subunit protein bL36 (37 aa).

Belongs to the bacterial ribosomal protein bL36 family.

The sequence is that of Large ribosomal subunit protein bL36 from Synechococcus sp. (strain CC9311).